A 286-amino-acid polypeptide reads, in one-letter code: Aldo-keto reductase MAV_4483 (286 aa).

Tyr61 functions as the Proton donor in the catalytic mechanism. Positions 201, 203, 239, 241, 242, 247, and 251 each coordinate NADPH.

The protein belongs to the aldo/keto reductase family.

The sequence is that of Aldo-keto reductase MAV_4483 from Mycobacterium avium (strain 104).